The following is a 228-amino-acid chain: Mediator of RNA polymerase II transcription subunit 7-B (228 aa).

The protein belongs to the Mediator complex subunit 7 family. In terms of assembly, component of the Mediator complex.

It localises to the nucleus. Its function is as follows. Component of the Mediator complex, a coactivator involved in the regulated transcription of nearly all RNA polymerase II-dependent genes. Mediator functions as a bridge to convey information from gene-specific regulatory proteins to the basal RNA polymerase II transcription machinery. Mediator is recruited to promoters by direct interactions with regulatory proteins and serves as a scaffold for the assembly of a functional preinitiation complex with RNA polymerase II and the general transcription factors. The chain is Mediator of RNA polymerase II transcription subunit 7-B (med7-b) from Xenopus laevis (African clawed frog).